The chain runs to 155 residues: Xanthine-guanine phosphoribosyltransferase (155 aa).

Residues 37–38 (RG), Arg-69, and 90–98 (DDLVDTGGT) each bind 5-phospho-alpha-D-ribose 1-diphosphate. Position 69 (Arg-69) interacts with GMP. Residue Asp-91 coordinates Mg(2+). The guanine site is built by Asp-94 and Ile-137. Xanthine-binding residues include Asp-94 and Ile-137. Residues 94–98 (DTGGT) and 136–137 (WI) each bind GMP.

It belongs to the purine/pyrimidine phosphoribosyltransferase family. XGPT subfamily. In terms of assembly, homotetramer. Requires Mg(2+) as cofactor.

Its subcellular location is the cell inner membrane. The enzyme catalyses GMP + diphosphate = guanine + 5-phospho-alpha-D-ribose 1-diphosphate. The catalysed reaction is XMP + diphosphate = xanthine + 5-phospho-alpha-D-ribose 1-diphosphate. It catalyses the reaction IMP + diphosphate = hypoxanthine + 5-phospho-alpha-D-ribose 1-diphosphate. Its pathway is purine metabolism; GMP biosynthesis via salvage pathway; GMP from guanine: step 1/1. The protein operates within purine metabolism; XMP biosynthesis via salvage pathway; XMP from xanthine: step 1/1. Its function is as follows. Purine salvage pathway enzyme that catalyzes the transfer of the ribosyl-5-phosphate group from 5-phospho-alpha-D-ribose 1-diphosphate (PRPP) to the N9 position of the 6-oxopurines guanine and xanthine to form the corresponding ribonucleotides GMP (guanosine 5'-monophosphate) and XMP (xanthosine 5'-monophosphate), with the release of PPi. To a lesser extent, also acts on hypoxanthine. This is Xanthine-guanine phosphoribosyltransferase from Aeromonas salmonicida (strain A449).